A 1069-amino-acid polypeptide reads, in one-letter code: Enteropeptidase (1069 aa).

Residues 1–18 (MKSSRDEAVGHHSISSFE) are Cytoplasmic-facing. The helical; Signal-anchor for type II membrane protein transmembrane segment at 19–47 (VMLSALFIMLMVFSIGLIAVSWLAVKESE) threads the bilayer. The Extracellular segment spans residues 48 to 1069 (GDAALGKSHE…FIEWIHSFLH (1022 aa)). The SEA domain occupies 54 to 169 (KSHEVRGTFK…NSIDITASLS (116 aa)). N-linked (GlcNAc...) asparagine glycosylation is found at Asn147, Asn197, and Asn212. The region spanning 227–268 (IECQPGSRPCAHAWNCVATDLFCDGEVNCPDGSDEDTGLCAT) is the LDL-receptor class A 1 domain. Intrachain disulfides connect Cys229/Cys242, Cys236/Cys255, Cys249/Cys266, and Cys270/Cys298. One can recognise a CUB 1 domain in the interval 270–379 (CDGRFLLTGD…IGFNATYSTF (110 aa)). Asn373, Asn380, Asn433, Asn515, Asn579, and Asn675 each carry an N-linked (GlcNAc...) asparagine glycan. Residues 387 to 549 (YEKIDCTFDD…ISLTNGICSQ (163 aa)) enclose the MAM domain. Cys569 and Cys597 are disulfide-bonded. Positions 569 to 679 (CGGPFELWEP…KGFKANFTSG (111 aa)) constitute a CUB 2 domain. In terms of domain architecture, LDL-receptor class A 2 spans 686–724 (EPCQDDEFQCKDGNCIPLGNLCDSYPHCRDGSDEASCVR). 3 disulfide bridges follow: Cys688–Cys700, Cys695–Cys713, and Cys707–Cys722. An SRCR domain is found at 723 to 816 (VRFLNGTRSN…LILLQCNHKS (94 aa)). N-linked (GlcNAc...) asparagine glycans are attached at residues Asn727, Asn751, Asn770, and Asn791. Cystine bridges form between Cys802–Cys812, Cys817–Cys945, Cys859–Cys875, Cys959–Cys1027, Cys991–Cys1006, and Cys1017–Cys1045. The Peptidase S1 domain maps to 830–1069 (IVGGSDAQAG…FIEWIHSFLH (240 aa)). Residue His874 is the Charge relay system of the active site. N-linked (GlcNAc...) asparagine glycosylation is present at Asn897. Asp925 serves as the catalytic Charge relay system. N-linked (GlcNAc...) asparagine glycans are attached at residues Asn936 and Asn999. The active-site Charge relay system is the Ser1021.

This sequence belongs to the peptidase S1 family. Heterodimer of a catalytic (light) chain and a multidomain (heavy) chain linked by a disulfide bond. The chains are derived from a single precursor that is cleaved by a trypsin-like protease.

Its subcellular location is the membrane. It carries out the reaction Activation of trypsinogen by selective cleavage of 6-Lys-|-Ile-7 bond.. In terms of biological role, responsible for initiating activation of pancreatic proteolytic proenzymes (trypsin, chymotrypsin and carboxypeptidase A). It catalyzes the conversion of trypsinogen to trypsin which in turn activates other proenzymes including chymotrypsinogen, procarboxypeptidases, and proelastases. This Mus musculus (Mouse) protein is Enteropeptidase (Tmprss15).